Reading from the N-terminus, the 116-residue chain is Iron-sulfur cluster insertion protein ErpA (116 aa).

3 residues coordinate iron-sulfur cluster: C44, C108, and C110.

The protein belongs to the HesB/IscA family. As to quaternary structure, homodimer. The cofactor is iron-sulfur cluster.

Functionally, required for insertion of 4Fe-4S clusters for at least IspG. The polypeptide is Iron-sulfur cluster insertion protein ErpA (Shewanella loihica (strain ATCC BAA-1088 / PV-4)).